Consider the following 214-residue polypeptide: Guanylate kinase (214 aa).

Residues 6–192 form the Guanylate kinase-like domain; sequence GTLYIISAPS…ALEDLKAIFR (187 aa). 13–20 serves as a coordination point for ATP; that stretch reads APSGAGKT.

The protein belongs to the guanylate kinase family.

It is found in the cytoplasm. It catalyses the reaction GMP + ATP = GDP + ADP. Functionally, essential for recycling GMP and indirectly, cGMP. This chain is Guanylate kinase, found in Pseudomonas savastanoi pv. phaseolicola (strain 1448A / Race 6) (Pseudomonas syringae pv. phaseolicola (strain 1448A / Race 6)).